The primary structure comprises 477 residues: Stromelysin-1 (477 aa).

The N-terminal stretch at 1–17 is a signal peptide; the sequence is MKSLPILLLLCVAVCSA. A propeptide spans 18–99 (activation peptide); sequence YPLDGAARGE…PRCGVPDVGH (82 aa). The Cysteine switch signature appears at 90–97; sequence PRCGVPDV. Residue Cys-92 participates in Zn(2+) binding. The Ca(2+) site is built by Asp-124 and Asp-158. Positions 168 and 170 each coordinate Zn(2+). 4 residues coordinate Ca(2+): Asp-175, Gly-176, Gly-178, and Val-180. Residue His-183 participates in Zn(2+) binding. Positions 190, 192, and 194 each coordinate Ca(2+). Zn(2+) is bound at residue His-196. Ca(2+)-binding residues include Asp-198, Asp-199, and Glu-201. Residue His-218 participates in Zn(2+) binding. Glu-219 is a catalytic residue. Zn(2+)-binding residues include His-222 and His-228. Residues 262-287 are disordered; the sequence is LYGPPPDSPETPLVPTEPVPPEPGTP. Positions 276 to 285 are enriched in pro residues; the sequence is PTEPVPPEPG. Hemopexin repeat units lie at residues 287-336, 337-383, 385-433, and 434-477; these read PANC…WPSL, PSGV…GFPP, VRKI…FPGI, and DSKI…WLNC. Cysteines 290 and 477 form a disulfide. Residue Asp-297 participates in Ca(2+) binding. Positions 389 and 438 each coordinate Ca(2+).

It belongs to the peptidase M10A family. Ca(2+) is required as a cofactor. It depends on Zn(2+) as a cofactor. In terms of processing, directly cleaved by HTRA2 to produce active form.

Its subcellular location is the secreted. It is found in the extracellular space. The protein resides in the extracellular matrix. It localises to the nucleus. The protein localises to the cytoplasm. The enzyme catalyses Preferential cleavage where P1', P2' and P3' are hydrophobic residues.. Its activity is regulated as follows. Enzymatic activity is activated by HTRA2 in dopaminergic cells upon mitochondrial stress. Functionally, metalloproteinase with a rather broad substrate specificity that can degrade fibronectin, laminin, gelatins of type I, III, IV, and V; collagens III, IV, X, and IX, and cartilage proteoglycans. Activates different molecules including growth factors, plasminogen or other matrix metalloproteinases such as MMP9. Once released into the extracellular matrix (ECM), the inactive pro-enzyme is activated by the plasmin cascade signaling pathway. Also acts intracellularly. For example, in dopaminergic neurons, gets activated by the serine protease HTRA2 upon stress and plays a pivotal role in DA neuronal degeneration by mediating microglial activation and alpha-synuclein/SNCA cleavage. In addition, plays a role in immune response and possesses antiviral activity against various viruses such as vesicular stomatitis virus, influenza A virus (H1N1) and human herpes virus 1. Mechanistically, translocates from the cytoplasm into the cell nucleus upon virus infection to influence NF-kappa-B activities. This chain is Stromelysin-1 (MMP3), found in Homo sapiens (Human).